Consider the following 396-residue polypeptide: Probable sugar efflux transporter (396 aa).

Topologically, residues 1-14 (MTTNTVSRKVAWLR) are cytoplasmic. A helical transmembrane segment spans residues 15–35 (VVTLAVAAFIFNTTEFVPVGL). Residues 36-49 (LSDIAQSFHMQTAQ) lie on the Periplasmic side of the membrane. A helical membrane pass occupies residues 50–70 (VGIMLTIYAWVVALMSLPFML). Over 71–80 (MTSQVERRKL) the chain is Cytoplasmic. A helical transmembrane segment spans residues 81-101 (LICLFVVFIASHVLSFLSWSF). Threonine 102 is a topological domain (periplasmic). A helical membrane pass occupies residues 103-123 (VLVISRIGVAFAHAIFWSITA). Residues 124–135 (SLAIRMAPAGKR) lie on the Cytoplasmic side of the membrane. A helical transmembrane segment spans residues 136-156 (AQALSLIATGTALAMVLGLPL). Residues 157 to 169 (GRIVGQYFGWRMT) lie on the Periplasmic side of the membrane. The helical transmembrane segment at 170–190 (FFAIGIGALITLLCLIKLLPL) threads the bilayer. Residues 191-208 (LPSEHSGSLKSLPLLFRR) are Cytoplasmic-facing. A helical membrane pass occupies residues 209–229 (PALMSIYLLTVVVVTAHYTAY). The Periplasmic portion of the chain corresponds to 230–245 (SYIEPFVQNIAGFSAN). The chain crosses the membrane as a helical span at residues 246–266 (FATALLLLLGGAGIIGSVIFG). The Cytoplasmic segment spans residues 267–274 (KLGNQYAS). The helical transmembrane segment at 275 to 295 (ALVSTAIALLLVCLALLLPAA) threads the bilayer. Over 296 to 298 (NSE) the chain is Periplasmic. A helical transmembrane segment spans residues 299–319 (IHLGVLSIFWGIAMMIIGLGM). Over 320–332 (QVKVLALAPDATD) the chain is Cytoplasmic. Residues 333–353 (VAMALFSGIFNIGIGAGALVG) traverse the membrane as a helical segment. At 354 to 363 (NQVSLHWSMS) the chain is on the periplasmic side. Residues 364–384 (MIGYVGTVPAFAALIWSIIIF) form a helical membrane-spanning segment. Topologically, residues 385–396 (RRWPVTLEEQTQ) are cytoplasmic.

The protein belongs to the major facilitator superfamily. SotB (TC 2.A.1.2) family.

It is found in the cell inner membrane. Functionally, involved in the efflux of sugars. The physiological role may be the reduction of the intracellular concentration of toxic sugars or sugar metabolites. The chain is Probable sugar efflux transporter from Escherichia coli O157:H7.